The chain runs to 363 residues: 3,4-dihydroxy-2-butanone 4-phosphate synthase (363 aa).

The segment at 1–202 is DHBP synthase; sequence MSHISPIPEI…ITDLIEYRSR (202 aa). D-ribulose 5-phosphate is bound by residues 28 to 29, Asp33, 141 to 145, and Glu165; these read RE and RAGHT. Glu29 provides a ligand contact to Mg(2+). His144 is a Mg(2+) binding site. The segment at 205–363 is GTP cyclohydrolase II-like; it reads SLLEDMGNAP…EVVGFEEAEK (159 aa).

The protein in the N-terminal section; belongs to the DHBP synthase family. It in the C-terminal section; belongs to the GTP cyclohydrolase II family. Requires Mg(2+) as cofactor. Mn(2+) is required as a cofactor.

It catalyses the reaction D-ribulose 5-phosphate = (2S)-2-hydroxy-3-oxobutyl phosphate + formate + H(+). It functions in the pathway cofactor biosynthesis; riboflavin biosynthesis; 2-hydroxy-3-oxobutyl phosphate from D-ribulose 5-phosphate: step 1/1. In terms of biological role, catalyzes the conversion of D-ribulose 5-phosphate to formate and 3,4-dihydroxy-2-butanone 4-phosphate. The sequence is that of 3,4-dihydroxy-2-butanone 4-phosphate synthase (ribB) from Neisseria meningitidis serogroup A / serotype 4A (strain DSM 15465 / Z2491).